We begin with the raw amino-acid sequence, 183 residues long: MVVGIEGIITKKEPTFIIVKCASGLSYGIFISLFCSAKIQTQEKHEFFITQIIKEDSNKFYGFLDKDEQKMFEMLLKVNGVGANTAMAVCSSLDVNSFYKALSLGDESVLKKVPGIGPKSAKRIIVELSDTKTKLENVSDDKSEALAALLTLGFKQEKIISVLASAQATGTSELIKEALKKLG.

A domain I region spans residues 1–64 (MVVGIEGIIT…EDSNKFYGFL (64 aa)). Positions 65–139 (DKDEQKMFEM…DTKTKLENVS (75 aa)) are domain II. Residue Ser-139 is a region of interest, flexible linker. Residues 139 to 183 (SDDKSEALAALLTLGFKQEKIISVLASAQATGTSELIKEALKKLG) are domain III.

This sequence belongs to the RuvA family. Homotetramer. Forms an RuvA(8)-RuvB(12)-Holliday junction (HJ) complex. HJ DNA is sandwiched between 2 RuvA tetramers; dsDNA enters through RuvA and exits via RuvB. An RuvB hexamer assembles on each DNA strand where it exits the tetramer. Each RuvB hexamer is contacted by two RuvA subunits (via domain III) on 2 adjacent RuvB subunits; this complex drives branch migration. In the full resolvosome a probable DNA-RuvA(4)-RuvB(12)-RuvC(2) complex forms which resolves the HJ.

It is found in the cytoplasm. Its function is as follows. The RuvA-RuvB-RuvC complex processes Holliday junction (HJ) DNA during genetic recombination and DNA repair, while the RuvA-RuvB complex plays an important role in the rescue of blocked DNA replication forks via replication fork reversal (RFR). RuvA specifically binds to HJ cruciform DNA, conferring on it an open structure. The RuvB hexamer acts as an ATP-dependent pump, pulling dsDNA into and through the RuvAB complex. HJ branch migration allows RuvC to scan DNA until it finds its consensus sequence, where it cleaves and resolves the cruciform DNA. This chain is Holliday junction branch migration complex subunit RuvA, found in Campylobacter jejuni subsp. jejuni serotype O:23/36 (strain 81-176).